A 450-amino-acid polypeptide reads, in one-letter code: tRNA-2-methylthio-N(6)-dimethylallyladenosine synthase (450 aa).

One can recognise an MTTase N-terminal domain in the interval 3–119; that stretch reads RRYYITTFGC…LGELLEQVWN (117 aa). [4Fe-4S] cluster contacts are provided by C12, C48, C82, C154, C158, and C161. The 238-residue stretch at 140 to 377 folds into the Radical SAM core domain; it reads RDSTVTAWVN…NHLVAKIAGD (238 aa). Residues 380-444 enclose the TRAM domain; sequence QRYLGREEVV…AFSLSGVPLA (65 aa).

This sequence belongs to the methylthiotransferase family. MiaB subfamily. In terms of assembly, monomer. It depends on [4Fe-4S] cluster as a cofactor.

It localises to the cytoplasm. It catalyses the reaction N(6)-dimethylallyladenosine(37) in tRNA + (sulfur carrier)-SH + AH2 + 2 S-adenosyl-L-methionine = 2-methylsulfanyl-N(6)-dimethylallyladenosine(37) in tRNA + (sulfur carrier)-H + 5'-deoxyadenosine + L-methionine + A + S-adenosyl-L-homocysteine + 2 H(+). In terms of biological role, catalyzes the methylthiolation of N6-(dimethylallyl)adenosine (i(6)A), leading to the formation of 2-methylthio-N6-(dimethylallyl)adenosine (ms(2)i(6)A) at position 37 in tRNAs that read codons beginning with uridine. The protein is tRNA-2-methylthio-N(6)-dimethylallyladenosine synthase of Thermosynechococcus vestitus (strain NIES-2133 / IAM M-273 / BP-1).